The chain runs to 314 residues: Cyclic di-GMP binding protein TDE_0214 (314 aa).

Residues Gln146 to Gly234 enclose the PilZ domain. The segment covering Thr288–Pro300 has biased composition (polar residues). A disordered region spans residues Thr288–Ser314.

In terms of biological role, cyclic-di-GMP binding protein that plays important roles in motility, chemotaxis, biofilm formation and virulence. This Treponema denticola (strain ATCC 35405 / DSM 14222 / CIP 103919 / JCM 8153 / KCTC 15104) protein is Cyclic di-GMP binding protein TDE_0214.